A 102-amino-acid chain; its full sequence is MYAIIKTGGKQYKVEAGQAIYVEKLTAEAGEKVTFDQVILVGGETTKVGTPNIDGVTVDGTVEKQGREKKVVTFKYKPKKHSHQKKGHRQPYTKVMIDAINA.

The protein belongs to the bacterial ribosomal protein bL21 family. Part of the 50S ribosomal subunit. Contacts protein L20.

Functionally, this protein binds to 23S rRNA in the presence of protein L20. This Latilactobacillus sakei subsp. sakei (strain 23K) (Lactobacillus sakei subsp. sakei) protein is Large ribosomal subunit protein bL21.